A 150-amino-acid chain; its full sequence is MSEHAVSIDVREIMRCLPHRYPFLLVDRVTEMEPNVRIKALKNVTINEPFFVGHFEQYPVMPGVLIIEALAQAAGILAIKSQGERLENELYFFVGIDNARFKRQVVPGDQLVFEVTQMTVKRGIGKYAARALVDGQVACEAEIMCARREV.

The active site involves histidine 54.

It belongs to the thioester dehydratase family. FabZ subfamily.

It localises to the cytoplasm. It carries out the reaction a (3R)-hydroxyacyl-[ACP] = a (2E)-enoyl-[ACP] + H2O. Functionally, involved in unsaturated fatty acids biosynthesis. Catalyzes the dehydration of short chain beta-hydroxyacyl-ACPs and long chain saturated and unsaturated beta-hydroxyacyl-ACPs. The sequence is that of 3-hydroxyacyl-[acyl-carrier-protein] dehydratase FabZ from Chromobacterium violaceum (strain ATCC 12472 / DSM 30191 / JCM 1249 / CCUG 213 / NBRC 12614 / NCIMB 9131 / NCTC 9757 / MK).